Consider the following 206-residue polypeptide: 3-isopropylmalate dehydratase small subunit (206 aa).

It belongs to the LeuD family. LeuD type 1 subfamily. In terms of assembly, heterodimer of LeuC and LeuD.

The enzyme catalyses (2R,3S)-3-isopropylmalate = (2S)-2-isopropylmalate. Its pathway is amino-acid biosynthesis; L-leucine biosynthesis; L-leucine from 3-methyl-2-oxobutanoate: step 2/4. Functionally, catalyzes the isomerization between 2-isopropylmalate and 3-isopropylmalate, via the formation of 2-isopropylmaleate. The protein is 3-isopropylmalate dehydratase small subunit of Leptospira interrogans serogroup Icterohaemorrhagiae serovar copenhageni (strain Fiocruz L1-130).